The chain runs to 192 residues: Pyruvate synthase subunit PorC (192 aa).

As to quaternary structure, heterotetramer of one alpha, one beta, one delta and one gamma chain.

The catalysed reaction is 2 oxidized [2Fe-2S]-[ferredoxin] + pyruvate + CoA = 2 reduced [2Fe-2S]-[ferredoxin] + acetyl-CoA + CO2 + H(+). This chain is Pyruvate synthase subunit PorC (porC), found in Thermotoga maritima (strain ATCC 43589 / DSM 3109 / JCM 10099 / NBRC 100826 / MSB8).